The sequence spans 473 residues: tRNA-2-methylthio-N(6)-dimethylallyladenosine synthase (473 aa).

Positions 5 to 125 (RKLHIKSYGC…LPQLLARADQ (121 aa)) constitute an MTTase N-terminal domain. [4Fe-4S] cluster-binding residues include Cys14, Cys50, Cys88, Cys166, Cys170, and Cys173. The Radical SAM core domain occupies 152–384 (RARGISAFVT…QQLIDSQQSA (233 aa)). Positions 387–459 (KAAIGQTVDV…RYSLLGELAA (73 aa)) constitute a TRAM domain.

It belongs to the methylthiotransferase family. MiaB subfamily. In terms of assembly, monomer. Requires [4Fe-4S] cluster as cofactor.

It localises to the cytoplasm. It catalyses the reaction N(6)-dimethylallyladenosine(37) in tRNA + (sulfur carrier)-SH + AH2 + 2 S-adenosyl-L-methionine = 2-methylsulfanyl-N(6)-dimethylallyladenosine(37) in tRNA + (sulfur carrier)-H + 5'-deoxyadenosine + L-methionine + A + S-adenosyl-L-homocysteine + 2 H(+). Its function is as follows. Catalyzes the methylthiolation of N6-(dimethylallyl)adenosine (i(6)A), leading to the formation of 2-methylthio-N6-(dimethylallyl)adenosine (ms(2)i(6)A) at position 37 in tRNAs that read codons beginning with uridine. The protein is tRNA-2-methylthio-N(6)-dimethylallyladenosine synthase of Rhodopseudomonas palustris (strain BisB5).